A 212-amino-acid chain; its full sequence is Peptide methionine sulfoxide reductase MsrA (212 aa).

Cys52 is an active-site residue.

This sequence belongs to the MsrA Met sulfoxide reductase family.

The catalysed reaction is L-methionyl-[protein] + [thioredoxin]-disulfide + H2O = L-methionyl-(S)-S-oxide-[protein] + [thioredoxin]-dithiol. It carries out the reaction [thioredoxin]-disulfide + L-methionine + H2O = L-methionine (S)-S-oxide + [thioredoxin]-dithiol. Has an important function as a repair enzyme for proteins that have been inactivated by oxidation. Catalyzes the reversible oxidation-reduction of methionine sulfoxide in proteins to methionine. This Cronobacter sakazakii (strain ATCC BAA-894) (Enterobacter sakazakii) protein is Peptide methionine sulfoxide reductase MsrA.